Reading from the N-terminus, the 538-residue chain is Chaperonin GroEL 2 (538 aa).

ATP contacts are provided by residues 29–32 (TLGP), 86–90 (DGTTT), G412, 479–481 (NAA), and D495.

It belongs to the chaperonin (HSP60) family. In terms of assembly, forms a cylinder of 14 subunits composed of two heptameric rings stacked back-to-back. Interacts with the co-chaperonin GroES.

The protein localises to the cytoplasm. The catalysed reaction is ATP + H2O + a folded polypeptide = ADP + phosphate + an unfolded polypeptide.. In terms of biological role, together with its co-chaperonin GroES, plays an essential role in assisting protein folding. The GroEL-GroES system forms a nano-cage that allows encapsulation of the non-native substrate proteins and provides a physical environment optimized to promote and accelerate protein folding. The sequence is that of Chaperonin GroEL 2 from Renibacterium salmoninarum (strain ATCC 33209 / DSM 20767 / JCM 11484 / NBRC 15589 / NCIMB 2235).